The chain runs to 478 residues: Proline--tRNA ligase (478 aa).

Belongs to the class-II aminoacyl-tRNA synthetase family. ProS type 3 subfamily. Homodimer.

Its subcellular location is the cytoplasm. It catalyses the reaction tRNA(Pro) + L-proline + ATP = L-prolyl-tRNA(Pro) + AMP + diphosphate. Catalyzes the attachment of proline to tRNA(Pro) in a two-step reaction: proline is first activated by ATP to form Pro-AMP and then transferred to the acceptor end of tRNA(Pro). The protein is Proline--tRNA ligase of Clostridium botulinum (strain 657 / Type Ba4).